Here is a 103-residue protein sequence, read N- to C-terminus: Large ribosomal subunit protein bL21 (103 aa).

The protein belongs to the bacterial ribosomal protein bL21 family. As to quaternary structure, part of the 50S ribosomal subunit. Contacts protein L20.

Functionally, this protein binds to 23S rRNA in the presence of protein L20. The sequence is that of Large ribosomal subunit protein bL21 from Chloroflexus aggregans (strain MD-66 / DSM 9485).